Consider the following 281-residue polypeptide: Pantothenate synthetase (281 aa).

Residue M30–H37 coordinates ATP. The active-site Proton donor is the H37. Q61 provides a ligand contact to (R)-pantoate. Position 61 (Q61) interacts with beta-alanine. G147–D150 serves as a coordination point for ATP. Q153 is a binding site for (R)-pantoate. Residues I176 and K184–R187 contribute to the ATP site.

The protein belongs to the pantothenate synthetase family. Homodimer.

It localises to the cytoplasm. It catalyses the reaction (R)-pantoate + beta-alanine + ATP = (R)-pantothenate + AMP + diphosphate + H(+). It participates in cofactor biosynthesis; (R)-pantothenate biosynthesis; (R)-pantothenate from (R)-pantoate and beta-alanine: step 1/1. Its function is as follows. Catalyzes the condensation of pantoate with beta-alanine in an ATP-dependent reaction via a pantoyl-adenylate intermediate. The polypeptide is Pantothenate synthetase (Clostridium botulinum (strain Okra / Type B1)).